The sequence spans 121 residues: Putative membrane protein insertion efficiency factor (121 aa).

The segment at 97–121 is disordered; it reads VPARRDRHAGGRRCCPANVDEQRST.

Belongs to the UPF0161 family.

It is found in the cell membrane. In terms of biological role, could be involved in insertion of integral membrane proteins into the membrane. This Rhodococcus jostii (strain RHA1) protein is Putative membrane protein insertion efficiency factor.